Consider the following 414-residue polypeptide: Probable sugar-binding periplasmic protein (414 aa).

A signal peptide spans 1–22; sequence MRKFMTTTAVAALMLAATAARA.

It belongs to the bacterial solute-binding protein 1 family.

Its subcellular location is the periplasm. In terms of biological role, part of a binding-protein-dependent transport system for a sugar. This Rhizobium meliloti (strain 1021) (Ensifer meliloti) protein is Probable sugar-binding periplasmic protein.